The following is a 358-amino-acid chain: Phospho-N-acetylmuramoyl-pentapeptide-transferase (358 aa).

Transmembrane regions (helical) follow at residues Ala-28–Leu-48, Thr-70–Ala-90, Leu-92–Phe-112, Met-133–Tyr-153, Val-165–Ser-185, Gly-196–Thr-216, Val-233–Phe-253, Val-260–Leu-280, Leu-285–Val-305, and Lys-335–Leu-355.

It belongs to the glycosyltransferase 4 family. MraY subfamily. Mg(2+) serves as cofactor.

It localises to the cell inner membrane. It carries out the reaction UDP-N-acetyl-alpha-D-muramoyl-L-alanyl-gamma-D-glutamyl-meso-2,6-diaminopimeloyl-D-alanyl-D-alanine + di-trans,octa-cis-undecaprenyl phosphate = di-trans,octa-cis-undecaprenyl diphospho-N-acetyl-alpha-D-muramoyl-L-alanyl-D-glutamyl-meso-2,6-diaminopimeloyl-D-alanyl-D-alanine + UMP. Its pathway is cell wall biogenesis; peptidoglycan biosynthesis. Its function is as follows. Catalyzes the initial step of the lipid cycle reactions in the biosynthesis of the cell wall peptidoglycan: transfers peptidoglycan precursor phospho-MurNAc-pentapeptide from UDP-MurNAc-pentapeptide onto the lipid carrier undecaprenyl phosphate, yielding undecaprenyl-pyrophosphoryl-MurNAc-pentapeptide, known as lipid I. The chain is Phospho-N-acetylmuramoyl-pentapeptide-transferase from Desulfovibrio desulfuricans (strain ATCC 27774 / DSM 6949 / MB).